A 435-amino-acid polypeptide reads, in one-letter code: MIGGLFIYNHKGEVLISRVYRDDIGRNAVDAFRVNVIHARQQVRSPVTNIARTSFFHVKRSNIWLAAVTKQNVNAAMVFEFLYKMCDVMTAYFGKISEENIKNNFVLIYELLDEILDFGYPQNSETGALKTFITQQGIKSQHQTKEEQSQITSQVTGQIGWRREGIKYRRNELFLDVLESVNLLMSPQGQVLSAHVSGRVVMKSYLSGMPECKFGMNDKIVIEKQGKGTADETGKTGKQSIAIDDCTFHQCVRLSKFDSERSISFIPPDGEFELMRYRTTKDIILPFRVIPLVREVGRTKLEVKVVIKSNFKPSLLAQKIEVRIPTPLNTSGVQVICMKGKAKYKASENAIVWKIKRMAGMKESQISAEIELLPTNDKKKWARPPISMNFEVPFAPSGLKVRYLKVFEPKLNYSDHDVIKWVRYIGRSGIYETRC.

One can recognise an MHD domain in the interval 170–434 (RNELFLDVLE…IGRSGIYETR (265 aa)). The a 1,2-diacyl-sn-glycero-3-phospho-(1D-myo-inositol-3,4,5-trisphosphate) site is built by K341, K345, and K354.

It belongs to the adaptor complexes medium subunit family. As to quaternary structure, adaptor protein complex 2 (AP-2) is a heterotetramer composed of two large adaptins (alpha-type subunit and beta-type subunit), a medium adaptin (mu-type subunit) and a small adaptin (sigma-type subunit).

The protein localises to the cell membrane. The protein resides in the membrane. It localises to the coated pit. Its function is as follows. Component of the adaptor complexes which link clathrin to receptors in coated vesicles. Clathrin-associated protein complexes are believed to interact with the cytoplasmic tails of membrane proteins, leading to their selection and concentration. AP50 is a subunit of the plasma membrane adaptor. The complex binds polyphosphoinositide-containing lipids. This is AP-2 complex subunit mu (ap2m1) from Xenopus tropicalis (Western clawed frog).